We begin with the raw amino-acid sequence, 143 residues long: Transcriptional regulator MraZ (143 aa).

2 SpoVT-AbrB domains span residues 5 to 47 (EYHH…PIEE) and 76 to 119 (AMES…SAER).

It belongs to the MraZ family. In terms of assembly, forms oligomers.

It localises to the cytoplasm. Its subcellular location is the nucleoid. In Lactobacillus johnsonii (strain CNCM I-12250 / La1 / NCC 533), this protein is Transcriptional regulator MraZ.